Here is a 452-residue protein sequence, read N- to C-terminus: General transcription and DNA repair factor IIH subunit TFB2 (452 aa).

This sequence belongs to the TFB2 family. As to quaternary structure, component of the 7-subunit TFIIH core complex composed of XPB, XPD, TFB1/GTF2H1, GTF2H2/P44, TFB4/GTF2H3, TFB2/GTF2H4 and TFB5/GTF2H5, which is active in NER. The core complex associates with the 3-subunit CDK-activating kinase (CAK) module composed of CYCH1/cyclin H1, CDKD and MAT1/At4g30820 to form the 10-subunit holoenzyme (holo-TFIIH) active in transcription.

The protein resides in the nucleus. Component of the general transcription and DNA repair factor IIH (TFIIH) core complex, which is involved in general and transcription-coupled nucleotide excision repair (NER) of damaged DNA and, when complexed to CAK, in RNA transcription by RNA polymerase II. In NER, TFIIH acts by opening DNA around the lesion to allow the excision of the damaged oligonucleotide and its replacement by a new DNA fragment. In transcription, TFIIH has an essential role in transcription initiation. When the pre-initiation complex (PIC) has been established, TFIIH is required for promoter opening and promoter escape. Phosphorylation of the C-terminal tail (CTD) of the largest subunit of RNA polymerase II by the kinase module CAK controls the initiation of transcription. The chain is General transcription and DNA repair factor IIH subunit TFB2 from Arabidopsis thaliana (Mouse-ear cress).